Reading from the N-terminus, the 360-residue chain is 1-deoxy-D-xylulose 5-phosphate reductoisomerase (360 aa).

Residues serine 7, glycine 8, serine 9, isoleucine 10, and asparagine 115 each contribute to the NADPH site. Lysine 116 is a 1-deoxy-D-xylulose 5-phosphate binding site. NADPH is bound at residue glutamate 117. Aspartate 135 contacts Mn(2+). The 1-deoxy-D-xylulose 5-phosphate site is built by serine 136, glutamate 137, serine 159, and histidine 182. Glutamate 137 is a Mn(2+) binding site. Residue glycine 188 coordinates NADPH. Positions 195, 200, 201, and 204 each coordinate 1-deoxy-D-xylulose 5-phosphate. Residue glutamate 204 coordinates Mn(2+).

It belongs to the DXR family. The cofactor is Mg(2+). It depends on Mn(2+) as a cofactor.

The enzyme catalyses 2-C-methyl-D-erythritol 4-phosphate + NADP(+) = 1-deoxy-D-xylulose 5-phosphate + NADPH + H(+). Its pathway is isoprenoid biosynthesis; isopentenyl diphosphate biosynthesis via DXP pathway; isopentenyl diphosphate from 1-deoxy-D-xylulose 5-phosphate: step 1/6. In terms of biological role, catalyzes the NADPH-dependent rearrangement and reduction of 1-deoxy-D-xylulose-5-phosphate (DXP) to 2-C-methyl-D-erythritol 4-phosphate (MEP). The chain is 1-deoxy-D-xylulose 5-phosphate reductoisomerase from Campylobacter fetus subsp. fetus (strain 82-40).